Consider the following 829-residue polypeptide: 1,4-alpha-glucan branching enzyme GlgB (829 aa).

Residue Asp-405 is the Nucleophile of the active site. Glu-458 functions as the Proton donor in the catalytic mechanism. Residues 758-829 are disordered; it reads ASKATKVSTK…TTAKKTKDNA (72 aa). Low complexity-rich tracts occupy residues 778–789 and 810–820; these read VKAATKSSVTKV and VTKTAKASAKT.

This sequence belongs to the glycosyl hydrolase 13 family. GlgB subfamily. In terms of assembly, monomer.

It carries out the reaction Transfers a segment of a (1-&gt;4)-alpha-D-glucan chain to a primary hydroxy group in a similar glucan chain.. It functions in the pathway glycan biosynthesis; glycogen biosynthesis. Its function is as follows. Catalyzes the formation of the alpha-1,6-glucosidic linkages in glycogen by scission of a 1,4-alpha-linked oligosaccharide from growing alpha-1,4-glucan chains and the subsequent attachment of the oligosaccharide to the alpha-1,6 position. This chain is 1,4-alpha-glucan branching enzyme GlgB, found in Actinobacillus succinogenes (strain ATCC 55618 / DSM 22257 / CCUG 43843 / 130Z).